The following is a 446-amino-acid chain: N-succinylarginine dihydrolase (446 aa).

Substrate contacts are provided by residues 19–28 (AGLSFGNVAS), Asn-110, and 137–138 (HR). The active site involves Glu-174. Residue Arg-213 coordinates substrate. The active site involves His-249. Asp-251 and Asn-364 together coordinate substrate. The active-site Nucleophile is the Cys-370.

Belongs to the succinylarginine dihydrolase family. Homodimer.

It carries out the reaction N(2)-succinyl-L-arginine + 2 H2O + 2 H(+) = N(2)-succinyl-L-ornithine + 2 NH4(+) + CO2. The protein operates within amino-acid degradation; L-arginine degradation via AST pathway; L-glutamate and succinate from L-arginine: step 2/5. In terms of biological role, catalyzes the hydrolysis of N(2)-succinylarginine into N(2)-succinylornithine, ammonia and CO(2). This is N-succinylarginine dihydrolase from Burkholderia orbicola (strain MC0-3).